Reading from the N-terminus, the 130-residue chain is D-ribose pyranase (130 aa).

H20 acts as the Proton donor in catalysis. Substrate contacts are provided by residues D28, H97, and 119–121 (YAN).

Belongs to the RbsD / FucU family. RbsD subfamily. Homodecamer.

Its subcellular location is the cytoplasm. The catalysed reaction is beta-D-ribopyranose = beta-D-ribofuranose. It functions in the pathway carbohydrate metabolism; D-ribose degradation; D-ribose 5-phosphate from beta-D-ribopyranose: step 1/2. Catalyzes the interconversion of beta-pyran and beta-furan forms of D-ribose. The protein is D-ribose pyranase of Heliobacterium modesticaldum (strain ATCC 51547 / Ice1).